A 464-amino-acid chain; its full sequence is Soluble pyridine nucleotide transhydrogenase (464 aa).

35-44 (DSRRQVGGNC) contacts FAD.

It belongs to the class-I pyridine nucleotide-disulfide oxidoreductase family. FAD is required as a cofactor.

Its subcellular location is the cytoplasm. It catalyses the reaction NAD(+) + NADPH = NADH + NADP(+). Its function is as follows. Conversion of NADPH, generated by peripheral catabolic pathways, to NADH, which can enter the respiratory chain for energy generation. The polypeptide is Soluble pyridine nucleotide transhydrogenase (Pseudomonas savastanoi pv. phaseolicola (strain 1448A / Race 6) (Pseudomonas syringae pv. phaseolicola (strain 1448A / Race 6))).